The chain runs to 229 residues: DNA repair protein RecO (229 aa).

This sequence belongs to the RecO family.

In terms of biological role, involved in DNA repair and RecF pathway recombination. The chain is DNA repair protein RecO from Legionella pneumophila subsp. pneumophila (strain Philadelphia 1 / ATCC 33152 / DSM 7513).